Consider the following 271-residue polypeptide: Zinc finger protein 501 (271 aa).

C2H2-type zinc fingers lie at residues 22-44 (SKCS…QRIH), 50-72 (YVCS…LRIH), 78-100 (YKCN…LRIH), 106-128 (YKCN…QRIH), 134-156 (YKCA…QRSH), 162-184 (FKCN…QRIH), 190-212 (YTCT…ERTH), 218-240 (YKCS…YRIH), and 246-268 (YECF…QRLH).

This sequence belongs to the krueppel C2H2-type zinc-finger protein family.

It localises to the nucleus. It is found in the nucleolus. Functionally, may be involved in transcriptional regulation. Essential for Golgi structural integrity. The polypeptide is Zinc finger protein 501 (ZNF501) (Pongo abelii (Sumatran orangutan)).